The sequence spans 1022 residues: Integrator complex subunit 4 (1022 aa).

1D-myo-inositol hexakisphosphate contacts are provided by threonine 148 and lysine 184. The tract at residues lysine 818–aspartate 840 is disordered.

It belongs to the Integrator subunit 4 family. In terms of assembly, belongs to the multiprotein complex Integrator, at least composed of IntS1, IntS2, IntS3, IntS4, omd/IntS5, IntS6, defl/IntS7, IntS8, IntS9, IntS10, IntS11, IntS12, asun/IntS13, IntS14 and IntS15. The core complex associates with protein phosphatase 2A subunits mts/PP2A and Pp2A-29B, to form the Integrator-PP2A (INTAC) complex. IntS4 is part of the RNA endonuclease subcomplex, composed of IntS4, IntS9, IntS11 and inositol hexakisphosphate (InsP6).

It is found in the nucleus. In terms of biological role, component of the integrator complex, a multiprotein complex that terminates RNA polymerase II (Pol II) transcription in the promoter-proximal region of genes. The integrator complex provides a quality checkpoint during transcription elongation by driving premature transcription termination of transcripts that are unfavorably configured for transcriptional elongation: the complex terminates transcription by (1) catalyzing dephosphorylation of the C-terminal domain (CTD) of Pol II subunit Polr2A/Rbp1 and Spt5, and (2) degrading the exiting nascent RNA transcript via endonuclease activity. The integrator complex is also involved in the 3'-end processing of the U7 snRNA, and also the spliceosomal snRNAs U1, U2, U4 and U5. The protein is Integrator complex subunit 4 of Drosophila melanogaster (Fruit fly).